The primary structure comprises 217 residues: MWTLGRRSVASFLPRSALPGFAPTRAGAPRPAKDLSLSGLPGLRIGTAKAPARSQSSLSLRCLNQTLDVKKQSVCWINLRTAGTLGDAGTLDDTTYERLAEETLDSLAEFFEDLADKPYTFEDYDVSFGSGVLTVKLGGDLGTYVINKQTPNKQIWLSSPSSGPKRYDWTGRNWVYSHDGVSLHELLATELTQALKTKLDLSALAYSGKDTCCPAQC.

The N-terminal 42 residues, 1-42 (MWTLGRRSVASFLPRSALPGFAPTRAGAPRPAKDLSLSGLPG), are a transit peptide targeting the mitochondrion.

The protein belongs to the frataxin family. As to quaternary structure, component of the mitochondrial core iron-sulfur cluster (ISC) complex composed of NFS1, LYRM4, NDUFAB1, ISCU, FXN, and FDX2; this complex is a heterohexamer containing two copies of each monomer. Homodimer. Monomer (probable predominant form). Oligomer. Monomers and polymeric aggregates of &gt;1 MDa have been isolated from mitochondria. A small fraction of heterologous overexpressed recombinant frataxin forms high-molecular weight aggregates that incorporate iron. Interacts with LYRM4. Interacts (via ferrous form) with ISCU; the interaction is possible when both are bound to the dimeric form of the cysteine desulfurase complex (NFS1:LYRM4) and the interaction enhances FXN interaction to the dimeric form of the cysteine desulfurase complex (NFS1:LYRM4). Interacts with FECH; one iron-bound FXN monomer seems to interact with a FECH homodimer. Interacts with SDHA and SDHB. Interacts with ACO2; the interaction is dependent on citrate. Interacts with HSPA9. In terms of assembly, interacts with ACO1. Interacts with ISCU (cytoplasmic form). In terms of processing, processed in two steps by mitochondrial processing peptidase (MPP). MPP first cleaves the precursor to intermediate form and subsequently converts the intermediate to yield frataxin mature form (frataxin(81-210)) which is the predominant form. The additional forms, frataxin(56-210) and frataxin(78-210), seem to be produced when the normal maturation process is impaired; their physiological relevance is unsure.

The protein localises to the mitochondrion. Its subcellular location is the cytoplasm. It localises to the cytosol. The enzyme catalyses 4 Fe(2+) + O2 + 4 H(+) = 4 Fe(3+) + 2 H2O. Functionally, functions as an activator of persulfide transfer to the scaffoding protein ISCU as component of the core iron-sulfur cluster (ISC) assembly complex and participates to the [2Fe-2S] cluster assembly. Accelerates sulfur transfer from NFS1 persulfide intermediate to ISCU and to small thiols such as L-cysteine and glutathione leading to persulfuration of these thiols and ultimately sulfide release. Binds ferrous ion and is released from FXN upon the addition of both L-cysteine and reduced FDX2 during [2Fe-2S] cluster assembly. The core iron-sulfur cluster (ISC) assembly complex is involved in the de novo synthesis of a [2Fe-2S] cluster, the first step of the mitochondrial iron-sulfur protein biogenesis. This process is initiated by the cysteine desulfurase complex (NFS1:LYRM4:NDUFAB1) that produces persulfide which is delivered on the scaffold protein ISCU in a FXN-dependent manner. Then this complex is stabilized by FDX2 which provides reducing equivalents to accomplish the [2Fe-2S] cluster assembly. Finally, the [2Fe-2S] cluster is transferred from ISCU to chaperone proteins, including HSCB, HSPA9 and GLRX5. May play a role in the protection against iron-catalyzed oxidative stress through its ability to catalyze the oxidation of Fe(2+) to Fe(3+); the oligomeric form but not the monomeric form has in vitro ferroxidase activity. May be able to store large amounts of iron in the form of a ferrihydrite mineral by oligomerization; however, the physiological relevance is unsure as reports are conflicting and the function has only been shown using heterologous overexpression systems. May function as an iron chaperone protein that protects the aconitase [4Fe-4S]2+ cluster from disassembly and promotes enzyme reactivation. May play a role as a high affinity iron binding partner for FECH that is capable of both delivering iron to ferrochelatase and mediating the terminal step in mitochondrial heme biosynthesis. Modulates the RNA-binding activity of ACO1. May be involved in the cytoplasmic iron-sulfur protein biogenesis. May contribute to oxidative stress resistance and overall cell survival. The polypeptide is Frataxin, mitochondrial (Bos taurus (Bovine)).